A 198-amino-acid polypeptide reads, in one-letter code: DnaJ homolog subfamily C member 12 (198 aa).

N-acetylmethionine is present on methionine 1. The J domain maps to 14-79 (DYYALLGCDE…ESRARYDHWR (66 aa)). The segment at 114–177 (EGSGQTFTSS…GLSDLNCGHL (64 aa)) is disordered. Over residues 116-125 (SGQTFTSSVP) the composition is skewed to polar residues. Residues 126 to 156 (NKERSEQRETKKGDPDSNPEKMKQKEPKFPE) are compositionally biased toward basic and acidic residues. Phosphoserine is present on residues serine 160, serine 166, and serine 182.

Interacts with HSPA8. Interacts with TPH1. Interacts with TPH2. Highest levels of expression are detected in kidney, pineal gland, and raphe nuclei in the brain where it localizes to serotonerigic neurons.

The protein resides in the cytoplasm. In terms of biological role, probable co-chaperone that participates in the proper folding of biopterin-dependent aromatic amino acid hydroxylases, which include phenylalanine-4-hydroxylase (PAH), tyrosine 3-monooxygenase (TH) and peripheral and neuronal tryptophan hydroxylases (TPH1 and TPH2). The sequence is that of DnaJ homolog subfamily C member 12 (Dnajc12) from Mus musculus (Mouse).